A 116-amino-acid chain; its full sequence is uncharacterized protein (116 aa).

Residues 52–72 traverse the membrane as a helical segment; sequence VFCSANSVPLYLLLLTSALHF.

It localises to the mitochondrion membrane. This is an uncharacterized protein from Arabidopsis thaliana (Mouse-ear cress).